Here is a 626-residue protein sequence, read N- to C-terminus: Grainyhead-like protein 3 homolog (626 aa).

The tract at residues 30–95 (EAWKTYLENP…QGKRYYHGME (66 aa)) is transcription activation. The Grh/CP2 DB domain occupies 226-460 (SLKSDFEYTL…DLETPPVLFI (235 aa)).

This sequence belongs to the grh/CP2 family. Grainyhead subfamily. As to quaternary structure, homodimer, also forms heterodimers with GRHL1 and GRHL2. Interacts with LMO4. As to expression, expressed in brain, colon, pancreas, placenta and kidney. Isoform 1 is expressed in lung and tonsil. Isoform 2 is prostate-specific.

The protein localises to the nucleus. In terms of biological role, transcription factor playing important roles in primary neurulation and in the differentiation of stratified epithelia of both ectodermal and endodermal origin. Binds directly to the consensus DNA sequence 5'-AACCGGTT-3' acting as an activator and repressor on distinct target genes. xhibits functional redundancy with GRHL2 in epidermal morphogenetic events and epidermal wound repair. Exhibits functional redundancy with GRHL2 in epidermal morphogenetic events and epidermal wound repair but is essential to form the epidermal barrier with TGM3 as critical direct target gene among others. Despite being dispensable during normal epidermal homeostasis in the adulthood, is again required for barrier repair after immune-mediated epidermal damage, regulates distinct gene batteries in embryonic epidermal differentiation and adult epidermal barrier reformation after injury. Plays unique and cooperative roles with GRHL2 in establishing distinct zones of primary neurulation. Essential for spinal closure, functions cooperatively with GRHL2 in closure 2 (forebrain/midbrain boundary) and posterior neuropore closure. Also required for proper development of the oral periderm. No genetic interaction with GRHL3, no functional cooperativity due to diverse target gene selectivity. The protein is Grainyhead-like protein 3 homolog of Homo sapiens (Human).